Consider the following 657-residue polypeptide: Sodium/glucose cotransporter 4 (657 aa).

At 1 to 24 (MPASPEPVTATPEPEEVPAKFTLE) the chain is on the extracellular side. A helical transmembrane segment spans residues 25 to 45 (AADIAVVVVYFVFVLAVGIWS). Over 46-79 (SIRANRGTVGGYFLAGRSMTWWPIGASLMSSNVG) the chain is Cytoplasmic. Residues 80–100 (SGLFIGLAGTGAAGGLAVGGF) form a helical membrane-spanning segment. At 101 to 104 (EWNA) the chain is on the extracellular side. Residues 105-125 (AWVLIALGWIFVPVYISAGVV) traverse the membrane as a helical segment. The Cytoplasmic portion of the chain corresponds to 126-147 (TMPEYLRKRFGGQRIRIYMSVL). The chain crosses the membrane as a helical span at residues 148–168 (SLILYILTKISTDIFSGALFI). The Extracellular portion of the chain corresponds to 169–180 (QVSLGWDLYLST). The helical transmembrane segment at 181 to 201 (VILLAVTALYTIAGGLTAVIY) threads the bilayer. Over 202–207 (TDALQT) the chain is Cytoplasmic. The helical transmembrane segment at 208–228 (VIMVIGAFVLMFIAFDKVGWY) threads the bilayer. At 229 to 265 (EGLLVQYEKAAPALTVPNTTCHLPRSDAFHIFRDPVT) the chain is on the extracellular side. N-linked (GlcNAc...) asparagine glycosylation is present at Asn246. A helical membrane pass occupies residues 266–286 (GDIPWPGLIFGLTVLATWVWC). Residues 287–307 (TDQVIVQRSLSAKNLSHAKAG) lie on the Cytoplasmic side of the membrane. A helical transmembrane segment spans residues 308-328 (SVLGGYLKVFPMFFVVMPGMI). The Extracellular portion of the chain corresponds to 329 to 373 (SRALYPDEVACVDPDECQKICGAKVGCSNIAYPKLVVELMPVGMR). The chain crosses the membrane as a helical span at residues 374 to 396 (GLMIAVMMAALMSSLTSIFNSSS). Over 397–417 (TLFTMDIWQRIRPRASEKELM) the chain is Cytoplasmic. The chain crosses the membrane as a helical span at residues 418-438 (VVGRVFILLLVALSIVWIPVI). The Extracellular portion of the chain corresponds to 439–451 (QTANSGQLFDYIQ). The helical transmembrane segment at 452–472 (AITSFLSPPITTVFIMAIFWG) threads the bilayer. At 473-478 (RVNEQG) the chain is on the cytoplasmic side. The helical transmembrane segment at 479–499 (AFWGLMVGLVVGMVRMIMEFV) threads the bilayer. Residues 500–520 (YGTPSCGETDLRPSLLKDVHY) are Extracellular-facing. A helical transmembrane segment spans residues 521 to 541 (LYFALILLALTVLIITAVSLC). The Cytoplasmic segment spans residues 542-636 (TAPIPEKHLV…SIEEDHMWKT (95 aa)). The helical transmembrane segment at 637 to 657 (VCNVNALILLTANVFLWGYFA) threads the bilayer.

The protein belongs to the sodium:solute symporter (SSF) (TC 2.A.21) family.

It is found in the membrane. Functionally, probable sodium-dependent sugar transporter. This Danio rerio (Zebrafish) protein is Sodium/glucose cotransporter 4 (slc5a9).